Reading from the N-terminus, the 581-residue chain is NADH-quinone oxidoreductase subunit C/D (581 aa).

The segment at 1–172 (MSASELVTEL…PLFNMTASLF (172 aa)) is NADH dehydrogenase I subunit C. Residues 196–581 (ELMILNYGPH…IDYVMSDVDR (386 aa)) are NADH dehydrogenase I subunit D.

The protein in the N-terminal section; belongs to the complex I 30 kDa subunit family. This sequence in the C-terminal section; belongs to the complex I 49 kDa subunit family. NDH-1 is composed of 13 different subunits. Subunits NuoB, CD, E, F, and G constitute the peripheral sector of the complex.

It is found in the cell inner membrane. The catalysed reaction is a quinone + NADH + 5 H(+)(in) = a quinol + NAD(+) + 4 H(+)(out). Its function is as follows. NDH-1 shuttles electrons from NADH, via FMN and iron-sulfur (Fe-S) centers, to quinones in the respiratory chain. The immediate electron acceptor for the enzyme in this species is believed to be ubiquinone. Couples the redox reaction to proton translocation (for every two electrons transferred, four hydrogen ions are translocated across the cytoplasmic membrane), and thus conserves the redox energy in a proton gradient. The sequence is that of NADH-quinone oxidoreductase subunit C/D from Rhodopseudomonas palustris (strain TIE-1).